A 179-amino-acid chain; its full sequence is Inner membrane-spanning protein YciB (179 aa).

6 helical membrane passes run 3 to 23, 24 to 44, 49 to 69, 76 to 96, 121 to 141, and 149 to 169; these read FLFDLFPVILFFAAFKLADIY, TATAVAIGATVLQIGWVWFRH, PMQWVSLLIIAVFGGATLVLH, WKPTVLYWLFAAALLGSVLVW, LAWAGFFAAMGVLNLYVAYQF, and FKLFGSMGLMLVFIVAQSVWL.

This sequence belongs to the YciB family.

The protein localises to the cell inner membrane. Functionally, plays a role in cell envelope biogenesis, maintenance of cell envelope integrity and membrane homeostasis. The chain is Inner membrane-spanning protein YciB from Cupriavidus taiwanensis (strain DSM 17343 / BCRC 17206 / CCUG 44338 / CIP 107171 / LMG 19424 / R1) (Ralstonia taiwanensis (strain LMG 19424)).